The sequence spans 473 residues: MTEPVVTRFAPSPTGFLHIGGARTALFNWLYARKQGGKMLLRIEDTDRERSTDAAIKAILDGLNWLGIEWDGEVIYQFSRAARHREVAEQLLAEGKAYRCYATPEELTKMREAARAEGRAVRYDGRWRDRDPSEAPADVKPVIRLKAPQTGETVIEDQVQGRVVWQNENLDDLVLLRSDGTPTYMLAVVVDDHDMGVTHVIRGDDHLINAARQKHIYDALGWTVPTMAHIPLIHGPDGSKLSKRHGALGVEAYRTMGYLPAALRNYLVRLGWSHGDQEIFSTSEMIEAFELSGIGRSAARFDFAKLENLNGHYMRASGDAELVKAFEDILQFLPQGPALQAKLNDTTRAQLLQAMPGLKERAKTLLELIDSAAYIFADRPLALDAKASAVLTPQVRALLGELRSSLANVTDWNAANTEAAMRAYAEKNNLKLGAVAQPLRAALTGRTTSPGIFDVLAVLGRDDALARLQDQAA.

The short motif at proline 11 to glycine 21 is the 'HIGH' region element. The 'KMSKS' region signature appears at lysine 240–arginine 244. Position 243 (lysine 243) interacts with ATP.

The protein belongs to the class-I aminoacyl-tRNA synthetase family. Glutamate--tRNA ligase type 1 subfamily. Monomer.

Its subcellular location is the cytoplasm. It carries out the reaction tRNA(Glu) + L-glutamate + ATP = L-glutamyl-tRNA(Glu) + AMP + diphosphate. Its function is as follows. Catalyzes the attachment of glutamate to tRNA(Glu) in a two-step reaction: glutamate is first activated by ATP to form Glu-AMP and then transferred to the acceptor end of tRNA(Glu). The protein is Glutamate--tRNA ligase of Afipia carboxidovorans (strain ATCC 49405 / DSM 1227 / KCTC 32145 / OM5) (Oligotropha carboxidovorans).